The following is a 586-amino-acid chain: Mitogen-activated protein kinase 15 (586 aa).

A Protein kinase domain is found at 14-305 (YDIKKRLGKG…AEEALEHPYV (292 aa)). Residues 20–28 (LGKGAYGIV) and lysine 43 contribute to the ATP site. Residue aspartate 138 is the Proton acceptor of the active site. Disordered stretches follow at residues 354-506 (QKRE…DAPP) and 520-539 (NQRTAPIQGRDPRSAPRFGR). Positions 382–393 (PAPPAGTNPAPQ) are enriched in pro residues. Residues 400–414 (PQRAAIAAPNQPPAQ) are compositionally biased toward low complexity. A compositionally biased stretch (polar residues) spans 415-439 (KDSTQQSPKIKAPSSNPITHSTTHG). Low complexity predominate over residues 452 to 463 (AGQQGAAGTTAQ). Positions 464–473 (EVRKEVESRS) are enriched in basic and acidic residues. Over residues 484 to 498 (FSHSQQARAAATNSA) the composition is skewed to polar residues.

In terms of assembly, interacts with dvl2.

Its subcellular location is the cytoplasm. It localises to the cytoskeleton. The protein resides in the cilium basal body. The protein localises to the cell projection. It is found in the cilium. Its subcellular location is the cell junction. The catalysed reaction is L-seryl-[protein] + ATP = O-phospho-L-seryl-[protein] + ADP + H(+). It catalyses the reaction L-threonyl-[protein] + ATP = O-phospho-L-threonyl-[protein] + ADP + H(+). Atypical MAPK protein that regulates ciliogenesis by phosphorylating rcsd1 through its binding with dvl2. The protein is Mitogen-activated protein kinase 15 of Xenopus laevis (African clawed frog).